The chain runs to 353 residues: C2 calcium-dependent domain-containing protein 4D (353 aa).

Residues 135-191 are disordered; sequence CRAPDSDTASSPDSSPFGSPRPGLGRRRVSRPHSLSPEKASSADTSPHSPRRAGPPT. Positions 140-150 are enriched in low complexity; sequence SDTASSPDSSP. Residues 217-343 enclose the C2 domain; the sequence is RGGQLRLSTE…PPLGGGLGPG (127 aa).

The sequence is that of C2 calcium-dependent domain-containing protein 4D (C2CD4D) from Homo sapiens (Human).